The sequence spans 232 residues: Enolase-phosphatase E1 (232 aa).

It belongs to the HAD-like hydrolase superfamily. MasA/MtnC family. In terms of assembly, monomer. Mg(2+) is required as a cofactor.

The catalysed reaction is 5-methylsulfanyl-2,3-dioxopentyl phosphate + H2O = 1,2-dihydroxy-5-(methylsulfanyl)pent-1-en-3-one + phosphate. The protein operates within amino-acid biosynthesis; L-methionine biosynthesis via salvage pathway; L-methionine from S-methyl-5-thio-alpha-D-ribose 1-phosphate: step 3/6. It participates in amino-acid biosynthesis; L-methionine biosynthesis via salvage pathway; L-methionine from S-methyl-5-thio-alpha-D-ribose 1-phosphate: step 4/6. Bifunctional enzyme that catalyzes the enolization of 2,3-diketo-5-methylthiopentyl-1-phosphate (DK-MTP-1-P) into the intermediate 2-hydroxy-3-keto-5-methylthiopentenyl-1-phosphate (HK-MTPenyl-1-P), which is then dephosphorylated to form the acireductone 1,2-dihydroxy-3-keto-5-methylthiopentene (DHK-MTPene). In Nocardia farcinica (strain IFM 10152), this protein is Enolase-phosphatase E1.